Here is a 610-residue protein sequence, read N- to C-terminus: Alpha-fetoprotein (610 aa).

The N-terminal stretch at 1–18 is a signal peptide; that stretch reads MKWVVSIFLIVLLNFTES. Albumin domains follow at residues 19–210, 211–403, and 404–602; these read RTMH…ASIT, KELR…EELE, and KYIQ…ALIS. Residue H22 coordinates Cu(2+). 8 disulfides stabilise this stretch: C99–C114, C113–C124, C148–C193, C192–C201, C224–C270, C269–C277, C289–C303, and C302–C314. Residues S111, S115, and S117 each carry the phosphoserine modification. A glycan (N-linked (GlcNAc...) asparagine) is linked at N251. Residue S345 is modified to Phosphoserine. 7 cysteine pairs are disulfide-bonded: C385–C394, C417–C463, C462–C473, C486–C502, C501–C512, C539–C584, and C583–C592.

It belongs to the ALB/AFP/VDB family. Dimeric and trimeric forms have been found in addition to the monomeric form. In terms of tissue distribution, plasma. Synthesized by the fetal liver and yolk sac.

The protein localises to the secreted. In terms of biological role, binds copper, nickel, and fatty acids as well as, and bilirubin less well than, serum albumin. In Sus scrofa (Pig), this protein is Alpha-fetoprotein (AFP).